Consider the following 438-residue polypeptide: 3-phosphoshikimate 1-carboxyvinyltransferase (438 aa).

3-phosphoshikimate-binding residues include Lys20, Ser21, and Arg25. Position 20 (Lys20) interacts with phosphoenolpyruvate. Phosphoenolpyruvate-binding residues include Gly90 and Arg118. The 3-phosphoshikimate site is built by Ser163, Ser164, Gln165, Ser191, Asp320, and Lys347. Gln165 lines the phosphoenolpyruvate pocket. Asp320 functions as the Proton acceptor in the catalytic mechanism. 2 residues coordinate phosphoenolpyruvate: Arg351 and Arg392.

The protein belongs to the EPSP synthase family. In terms of assembly, monomer.

It localises to the cytoplasm. It carries out the reaction 3-phosphoshikimate + phosphoenolpyruvate = 5-O-(1-carboxyvinyl)-3-phosphoshikimate + phosphate. Its pathway is metabolic intermediate biosynthesis; chorismate biosynthesis. In terms of biological role, catalyzes the transfer of the enolpyruvyl moiety of phosphoenolpyruvate (PEP) to the 5-hydroxyl of shikimate-3-phosphate (S3P) to produce enolpyruvyl shikimate-3-phosphate and inorganic phosphate. This chain is 3-phosphoshikimate 1-carboxyvinyltransferase, found in Natronomonas pharaonis (strain ATCC 35678 / DSM 2160 / CIP 103997 / JCM 8858 / NBRC 14720 / NCIMB 2260 / Gabara) (Halobacterium pharaonis).